We begin with the raw amino-acid sequence, 378 residues long: Fetuin-B (378 aa).

A signal peptide spans 1–18 (MGVLRLLVLCTLAACCVA). Cystatin fetuin-B-type domains follow at residues 28–141 (NAPF…YNCT) and 152–261 (SMCP…VSCE). An N-linked (GlcNAc...) asparagine glycan is attached at asparagine 40. 5 disulfides stabilise this stretch: cysteine 96/cysteine 107, cysteine 120/cysteine 140, cysteine 154/cysteine 157, cysteine 217/cysteine 224, and cysteine 237/cysteine 260. The N-linked (GlcNAc...) asparagine glycan is linked to asparagine 139. Disordered regions lie at residues 266 to 338 (QDQV…PQGD) and 357 to 378 (LPFP…QRTP). A compositionally biased stretch (polar residues) spans 286 to 297 (QKNTAPTSSPSI). O-linked (GalNAc...) threonine glycosylation is found at threonine 289 and threonine 292. Residue serine 316 is modified to Phosphoserine. A compositionally biased stretch (basic and acidic residues) spans 362 to 378 (KEQRSPECPGPEKQRTP).

It belongs to the fetuin family. Liver.

The protein localises to the secreted. In terms of biological role, protease inhibitor required for egg fertilization. Required to prevent premature zona pellucida hardening before fertilization, probably by inhibiting the protease activity of ASTL, a protease that mediates the cleavage of ZP2 and triggers zona pellucida hardening. The sequence is that of Fetuin-B (Fetub) from Rattus norvegicus (Rat).